Consider the following 392-residue polypeptide: Quinolinate synthase (392 aa).

Residues 1–23 (MVDLPTTTPPAQPTTGNDEVDAL) form a disordered region. Iminosuccinate contacts are provided by histidine 57 and serine 74. Position 131 (cysteine 131) interacts with [4Fe-4S] cluster. Residues 163 to 165 (YIN) and serine 184 each bind iminosuccinate. Residue cysteine 254 participates in [4Fe-4S] cluster binding. Residues 280 to 282 (HPE) and threonine 297 each bind iminosuccinate. Cysteine 344 contacts [4Fe-4S] cluster.

The protein belongs to the quinolinate synthase family. Type 3 subfamily. [4Fe-4S] cluster is required as a cofactor.

It is found in the cytoplasm. The catalysed reaction is iminosuccinate + dihydroxyacetone phosphate = quinolinate + phosphate + 2 H2O + H(+). Its pathway is cofactor biosynthesis; NAD(+) biosynthesis; quinolinate from iminoaspartate: step 1/1. Functionally, catalyzes the condensation of iminoaspartate with dihydroxyacetone phosphate to form quinolinate. The polypeptide is Quinolinate synthase (Rhodopirellula baltica (strain DSM 10527 / NCIMB 13988 / SH1)).